A 146-amino-acid polypeptide reads, in one-letter code: Lysozyme C-2 (146 aa).

An N-terminal signal peptide occupies residues 1 to 18 (MKTLLVLALLLLSVSVQA). The 128-residue stretch at 19–146 (KVYDRCEFAR…VSQYIRGCKL (128 aa)) folds into the C-type lysozyme domain. Disulfide bonds link cysteine 24-cysteine 144, cysteine 48-cysteine 132, cysteine 81-cysteine 97, and cysteine 93-cysteine 111. Active-site residues include glutamate 53 and aspartate 69.

The protein belongs to the glycosyl hydrolase 22 family. Monomer.

It localises to the secreted. The catalysed reaction is Hydrolysis of (1-&gt;4)-beta-linkages between N-acetylmuramic acid and N-acetyl-D-glucosamine residues in a peptidoglycan and between N-acetyl-D-glucosamine residues in chitodextrins.. Functionally, lysozymes have primarily a bacteriolytic function; those in tissues and body fluids are associated with the monocyte-macrophage system and enhance the activity of immunoagents. The polypeptide is Lysozyme C-2 (Sus scrofa (Pig)).